Reading from the N-terminus, the 124-residue chain is Small ribosomal subunit protein uS12 (124 aa).

Residues 1–26 (MPTISQLVGSERKRLTKKTKSPALKA) form a disordered region. At Asp-89 the chain carries 3-methylthioaspartic acid. Positions 104 to 124 (TAGVKDRRQSRSKYGAKAPKD) are disordered.

It belongs to the universal ribosomal protein uS12 family. In terms of assembly, part of the 30S ribosomal subunit. Contacts proteins S8 and S17. May interact with IF1 in the 30S initiation complex.

Functionally, with S4 and S5 plays an important role in translational accuracy. Its function is as follows. Interacts with and stabilizes bases of the 16S rRNA that are involved in tRNA selection in the A site and with the mRNA backbone. Located at the interface of the 30S and 50S subunits, it traverses the body of the 30S subunit contacting proteins on the other side and probably holding the rRNA structure together. The combined cluster of proteins S8, S12 and S17 appears to hold together the shoulder and platform of the 30S subunit. The polypeptide is Small ribosomal subunit protein uS12 (Prochlorococcus marinus (strain MIT 9215)).